The following is a 628-amino-acid chain: (+)-alpha pinene synthase 1, chloroplastic (628 aa).

3 residues coordinate Mg(2+): aspartate 379, aspartate 383, and aspartate 531. A DDXXD motif motif is present at residues 379 to 383 (DDIYD).

The protein belongs to the terpene synthase family. Tpsd subfamily. Mg(2+) serves as cofactor. It depends on Mn(2+) as a cofactor.

The protein resides in the plastid. The protein localises to the chloroplast. It carries out the reaction (2E)-geranyl diphosphate = (1R,5R)-alpha-pinene + diphosphate. It functions in the pathway terpene metabolism; oleoresin biosynthesis. Its pathway is secondary metabolite biosynthesis; terpenoid biosynthesis. In terms of biological role, monoterpene synthase (TPS) involved in the biosynthesis of monoterpene natural products included in conifer oleoresin secretions and volatile emissions; these compounds contribute to biotic and abiotic stress defense against herbivores and pathogens. Catalyzes the conversion of (2E)-geranyl diphosphate (GPP) to (+)-alpha-pinene. The sequence is that of (+)-alpha pinene synthase 1, chloroplastic from Pinus contorta (Shore pine).